Reading from the N-terminus, the 317-residue chain is Ribose-phosphate pyrophosphokinase (317 aa).

Residues 43 to 45 and 102 to 103 each bind ATP; these read DGE and RQ. Mg(2+)-binding residues include His136 and Asp175. Lys198 is a catalytic residue. D-ribose 5-phosphate is bound by residues Arg200, Asp224, and 228-232; that span reads DTAGT.

Belongs to the ribose-phosphate pyrophosphokinase family. Class I subfamily. As to quaternary structure, homohexamer. Mg(2+) is required as a cofactor.

The protein resides in the cytoplasm. The enzyme catalyses D-ribose 5-phosphate + ATP = 5-phospho-alpha-D-ribose 1-diphosphate + AMP + H(+). Its pathway is metabolic intermediate biosynthesis; 5-phospho-alpha-D-ribose 1-diphosphate biosynthesis; 5-phospho-alpha-D-ribose 1-diphosphate from D-ribose 5-phosphate (route I): step 1/1. Involved in the biosynthesis of the central metabolite phospho-alpha-D-ribosyl-1-pyrophosphate (PRPP) via the transfer of pyrophosphoryl group from ATP to 1-hydroxyl of ribose-5-phosphate (Rib-5-P). The polypeptide is Ribose-phosphate pyrophosphokinase (Corynebacterium ammoniagenes (Brevibacterium ammoniagenes)).